The following is a 129-amino-acid chain: Keratin-associated protein 5-6 (129 aa).

6 repeat units span residues 28–31, 34–37, 40–43, 90–93, 109–112, and 119–122. The segment at 28 to 112 is 6 X 4 AA repeats of C-C-X-P; that stretch reads CCVPICCCKP…SCCQSSCCKP (85 aa).

Belongs to the KRTAP type 5 family. In terms of assembly, interacts with hair keratins. In terms of tissue distribution, expressed in hair root and not in skin. Expressed also in liver and skeletal muscle.

Its function is as follows. In the hair cortex, hair keratin intermediate filaments are embedded in an interfilamentous matrix, consisting of hair keratin-associated protein (KRTAP), which are essential for the formation of a rigid and resistant hair shaft through their extensive disulfide bond cross-linking with abundant cysteine residues of hair keratins. The matrix proteins include the high-sulfur and high-glycine-tyrosine keratins. The protein is Keratin-associated protein 5-6 (KRTAP5-6) of Homo sapiens (Human).